Reading from the N-terminus, the 297-residue chain is Undecaprenyl-diphosphatase (297 aa).

7 helical membrane-spanning segments follow: residues 39–59 (PGAA…LIYF), 85–105 (ARLA…GLTL), 113–133 (FRSL…LLVV), 151–171 (GILI…RSGT), 190–210 (SFLL…KHLL), 220–240 (ALWV…AWLL), and 249–269 (LVFV…LQTG).

The protein belongs to the UppP family.

The protein resides in the cell inner membrane. The enzyme catalyses di-trans,octa-cis-undecaprenyl diphosphate + H2O = di-trans,octa-cis-undecaprenyl phosphate + phosphate + H(+). Catalyzes the dephosphorylation of undecaprenyl diphosphate (UPP). Confers resistance to bacitracin. This Myxococcus xanthus (strain DK1622) protein is Undecaprenyl-diphosphatase.